The chain runs to 185 residues: Threonylcarbamoyl-AMP synthase (185 aa).

The YrdC-like domain occupies 1–185; that stretch reads MKNFEQVLKA…AKTSQILRQG (185 aa). Residues 163 to 185 form a disordered region; that stretch reads ETSGRNKPSEIRDAKTSQILRQG. Residues 164–177 show a composition bias toward basic and acidic residues; the sequence is TSGRNKPSEIRDAK.

Belongs to the SUA5 family. TsaC subfamily.

It localises to the cytoplasm. It carries out the reaction L-threonine + hydrogencarbonate + ATP = L-threonylcarbamoyladenylate + diphosphate + H2O. In terms of biological role, required for the formation of a threonylcarbamoyl group on adenosine at position 37 (t(6)A37) in tRNAs that read codons beginning with adenine. Catalyzes the conversion of L-threonine, HCO(3)(-)/CO(2) and ATP to give threonylcarbamoyl-AMP (TC-AMP) as the acyladenylate intermediate, with the release of diphosphate. This Vibrio campbellii (strain ATCC BAA-1116) protein is Threonylcarbamoyl-AMP synthase.